The primary structure comprises 1938 residues: tRNA (32-2'-O)-methyltransferase regulator THADA (1938 aa).

Residues 877–909 are a coiled coil; that stretch reads ERNTLVVIKCLMENLEDEISQAENSLLQAASSF. Residues S1006, S1015, and S1152 each carry the phosphoserine modification.

The protein belongs to the THADA family.

Its function is as follows. Together with methyltransferase FTSJ1, methylates the 2'-O-ribose of nucleotides at position 32 of the anticodon loop of substrate tRNAs. The protein is tRNA (32-2'-O)-methyltransferase regulator THADA (Thada) of Mus musculus (Mouse).